The chain runs to 407 residues: Indoleamine 2,3-dioxygenase 2 (407 aa).

A heme-binding site is contributed by histidine 347.

Belongs to the indoleamine 2,3-dioxygenase family. Requires heme as cofactor. Detected in liver, small intestine, spleen, placenta, thymus, lung, brain, kidney, and colon. Also expressed at low level in testis and thyroid. Not expressed in the majority of human tumor samples (&gt;99%).

It catalyses the reaction L-tryptophan + O2 = N-formyl-L-kynurenine. The protein operates within amino-acid degradation; L-tryptophan degradation via kynurenine pathway; L-kynurenine from L-tryptophan: step 1/2. Its activity is regulated as follows. Activity is inhibited by D-1MT (1-methyl-D-tryptophan) and MTH-trp (methylthiohydantoin-DL-tryptophan) but not L-1MT (1-methyl-L-tryptophan). Its function is as follows. Catalyzes the first and rate limiting step of the catabolism of the essential amino acid tryptophan along the kynurenine pathway. Involved in immune regulation. May not play a significant role in tryptophan-related tumoral resistance. The protein is Indoleamine 2,3-dioxygenase 2 of Homo sapiens (Human).